The primary structure comprises 224 residues: Charged multivesicular body protein 4c (224 aa).

2 disordered regions span residues Met1–Gln21 and Ser182–Met224. A compositionally biased stretch (gly residues) spans Leu7–Gly17. A coiled-coil region spans residues Gln21 to Ala221.

This sequence belongs to the SNF7 family. Probable core component of the endosomal sorting required for transport complex III (ESCRT-III). ESCRT-III components are thought to multimerize to form a flat lattice on the perimeter membrane of the endosome.

The protein resides in the cytoplasm. Its subcellular location is the cytosol. It localises to the late endosome membrane. Its function is as follows. Probable core component of the endosomal sorting required for transport complex III (ESCRT-III) which is involved in multivesicular bodies (MVBs) formation and sorting of endosomal cargo proteins into MVBs. MVBs contain intraluminal vesicles (ILVs) that are generated by invagination and scission from the limiting membrane of the endosome and mostly are delivered to lysosomes enabling degradation of membrane proteins, such as stimulated growth factor receptors, lysosomal enzymes and lipids. Key component of the cytokinesis checkpoint, a process required to delay abscission to prevent both premature resolution of intercellular chromosome bridges and accumulation of DNA damage. The sequence is that of Charged multivesicular body protein 4c (chmp4c) from Danio rerio (Zebrafish).